A 509-amino-acid chain; its full sequence is MNNTISPGEVLKVIKERIENFDNQVKSDSVGEVISIKDGIALIYGLEKAKFGEVVVFANGITGIVLGLDCDTASVVVFGDERSVGEGDTAKCTGKLMDVPVGLELLGRVVDALGNPIDGAGSIDSKTRLPVEIKAPGIIARQSVTEPLQTGIKIIDMLIPIGRGQRELIIGDRKTGKTAIAIDTIINQKAHNDVVSEKEKVYCIYVAIGQKNSSVARIVDKLRVSGALEYTIVVAAGASDTVSFQYLAPYAACAMGEFFRDNGMHCLIVYDDLSKHAVAYRQMSLLLRRPPGREAYPGDVFFLHSRLLERAAKMSDKEGGGSLTALPIIETQAGDVSAYVPTNVISITDGQIFLESEIFYKGLRPAVNVGLSVSRVGSAAQTKSVKKVAGSVKLSLAQYRELEDFAKFGSDIDVHSQKVLDRGRRMMELLKQKQYSPLSVPEQVAVIFAGTSGCLDGVSVSDISRFEEMLLKELNENYPDVLSSILNNFTDDVKDLLLEIIGKVTSNFE.

171–178 (GDRKTGKT) is a binding site for ATP.

Belongs to the ATPase alpha/beta chains family. As to quaternary structure, F-type ATPases have 2 components, CF(1) - the catalytic core - and CF(0) - the membrane proton channel. CF(1) has five subunits: alpha(3), beta(3), gamma(1), delta(1), epsilon(1). CF(0) has three main subunits: a(1), b(2) and c(9-12). The alpha and beta chains form an alternating ring which encloses part of the gamma chain. CF(1) is attached to CF(0) by a central stalk formed by the gamma and epsilon chains, while a peripheral stalk is formed by the delta and b chains.

The protein resides in the cell inner membrane. The enzyme catalyses ATP + H2O + 4 H(+)(in) = ADP + phosphate + 5 H(+)(out). Functionally, produces ATP from ADP in the presence of a proton gradient across the membrane. The alpha chain is a regulatory subunit. This Ehrlichia chaffeensis (strain ATCC CRL-10679 / Arkansas) protein is ATP synthase subunit alpha.